The chain runs to 96 residues: Transcriptional regulator ATRY (96 aa).

The segment at 1–12 adopts a GATA-type; atypical zinc-finger fold; sequence VICTACGQQVNQ. Residues 1–96 form the ADD domain; it reads VICTACGQQV…IAVCDSVLEN (96 aa). A PHD-type; atypical zinc finger spans residues 27–82; that stretch reads LICKRWCAEGGNLICCDSCHNAFCKKCIWRNLGRKEISKIMNEKNEWHCYICCPEP.

The protein belongs to the SNF2/RAD54 helicase family. As to expression, expressed in developing and adult testis. Also weakly expressed in prostate and epididymis.

The protein resides in the nucleus. It carries out the reaction ATP + H2O = ADP + phosphate + H(+). Its function is as follows. Could be a global transcriptional regulator. Modifies gene expression by affecting chromatin. The protein is Transcriptional regulator ATRY (ATRY) of Notamacropus eugenii (Tammar wallaby).